We begin with the raw amino-acid sequence, 555 residues long: Transmembrane protein 87A (555 aa).

Residues 1–21 (MAAAAWLQVLPVILLLLGAHP) form the signal peptide. Topologically, residues 22 to 225 (SPLSFFSAGP…YEYLTLEDYP (204 aa)) are lumenal. Disulfide bonds link C74–C128 and C89–C431. N79, N127, N157, and N160 each carry an N-linked (GlcNAc...) asparagine glycan. The helical transmembrane segment at 226-246 (LMIFFMVMCIVYVLFGVLWLA) threads the bilayer. Over 247–257 (WSACYWRDLLR) the chain is Cytoplasmic. Residues 258–278 (IQFWIGAVIFLGMLEKAVFYA) traverse the membrane as a helical segment. Residues 279 to 305 (EFQNIRYKGESVQGALILAELLSAVKR) lie on the Lumenal side of the membrane. A helical membrane pass occupies residues 306 to 322 (SLARTLVIIVSLGYGIV). Over 323 to 325 (KPR) the chain is Cytoplasmic. Residues 326 to 346 (LGVTLHKVVVAGALYLLFSGM) traverse the membrane as a helical segment. Topologically, residues 347–361 (EGVLRVTGAQTDLAS) are lumenal. A helical transmembrane segment spans residues 362–382 (LAFIPLAFLDTALCWWIFISL). The Cytoplasmic segment spans residues 383-403 (TQTMKLLKLRRNIVKLSLYRH). Residues 404–424 (FTNTLILAVAASIVFIIWTTM) traverse the membrane as a helical segment. At 425 to 437 (KFRIVTCQSDWRE) the chain is on the lumenal side. The chain crosses the membrane as a helical span at residues 438–458 (LWVDDAIWRLLFSMILFVIMV). Topologically, residues 459–555 (LWRPSANNQR…ITHFERSKME (97 aa)) are cytoplasmic. Positions 473 to 516 (PLSEEEEEDEQKEPMLKESFEGMKMRSTKQEPNGNSKVNKAQED) are disordered. The span at 484–496 (KEPMLKESFEGMK) shows a compositional bias: basic and acidic residues. A compositionally biased stretch (polar residues) spans 502–511 (QEPNGNSKVN). S540 carries the post-translational modification Phosphoserine.

Belongs to the LU7TM family. TMEM87 subfamily. May interact with STOML3; STOML3 potentiates the mechanosensitive ion channel activity associated with TMEM87A.

It is found in the cell membrane. The protein localises to the golgi apparatus membrane. It localises to the cell projection. The protein resides in the ruffle. In terms of biological role, potential monoatomic ion channel gated by mechanical force, implicated in normal touch sensitivity through the generation of mechanically activated currents. However, a direct channel activity is debated and an alternative could be that it functions as a chaperone for an unidentified mechanosensitive ion channel. Could also be involved in cell mechanosensitivity regulating cell adhesion and migration. May also be involved in retrograde transport from endosomes to the trans-Golgi network (TGN). This chain is Transmembrane protein 87A, found in Homo sapiens (Human).